The following is a 258-amino-acid chain: Type III pantothenate kinase (258 aa).

9–16 (DIGNTSVN) is an ATP binding site. 110 to 113 (GADR) provides a ligand contact to substrate. The active-site Proton acceptor is the aspartate 112. Aspartate 132 is a binding site for K(+). Threonine 135 provides a ligand contact to ATP. Threonine 187 lines the substrate pocket.

It belongs to the type III pantothenate kinase family. In terms of assembly, homodimer. The cofactor is NH4(+). Requires K(+) as cofactor.

It localises to the cytoplasm. The catalysed reaction is (R)-pantothenate + ATP = (R)-4'-phosphopantothenate + ADP + H(+). It functions in the pathway cofactor biosynthesis; coenzyme A biosynthesis; CoA from (R)-pantothenate: step 1/5. Catalyzes the phosphorylation of pantothenate (Pan), the first step in CoA biosynthesis. The chain is Type III pantothenate kinase from Dehalococcoides mccartyi (strain ATCC BAA-2266 / KCTC 15142 / 195) (Dehalococcoides ethenogenes (strain 195)).